A 351-amino-acid polypeptide reads, in one-letter code: tRNA-specific 2-thiouridylase MnmA (351 aa).

Residues 7–14 (GLSGGVDS) and Leu33 each bind ATP. Cys94 serves as the catalytic Nucleophile. A disulfide bond links Cys94 and Cys193. Position 119 (Gly119) interacts with ATP. The tract at residues 143-145 (KDQ) is interaction with tRNA. Cys193 (cysteine persulfide intermediate) is an active-site residue. The interval 298–299 (RY) is interaction with tRNA.

The protein belongs to the MnmA/TRMU family.

It is found in the cytoplasm. It carries out the reaction S-sulfanyl-L-cysteinyl-[protein] + uridine(34) in tRNA + AH2 + ATP = 2-thiouridine(34) in tRNA + L-cysteinyl-[protein] + A + AMP + diphosphate + H(+). In terms of biological role, catalyzes the 2-thiolation of uridine at the wobble position (U34) of tRNA, leading to the formation of s(2)U34. This is tRNA-specific 2-thiouridylase MnmA from Nostoc punctiforme (strain ATCC 29133 / PCC 73102).